The following is a 471-amino-acid chain: PTS system mannitol-specific EIICB component (471 aa).

Over 1-29 the chain is Cytoplasmic; sequence MTHTSENQAGFRVKIQRFGSYLSGMIMPN. The PTS EIIC type-2 domain occupies 18–342; that stretch reads FGSYLSGMIM…FFVASIFLKS (325 aa). A helical membrane pass occupies residues 30 to 51; that stretch reads IGAFIAWGIITALFIPTGWLPN. The Extracellular portion of the chain corresponds to 52–55; sequence ETFA. The chain crosses the membrane as a helical span at residues 56–76; sequence KLVGPMITYLLPLLIGYTGGK. Residues 77–139 lie on the Cytoplasmic side of the membrane; the sequence is MIYDVRGGVV…QGFEMLVNNF (63 aa). Residues 140–161 form a helical membrane-spanning segment; the sequence is SAGIIGGLLTLAAFKGVGPVVS. The Extracellular portion of the chain corresponds to 162-170; it reads AISKTLAAG. Residues 171-191 traverse the membrane as a helical segment; that stretch reads VEKIVDLHLLPLANIFIEPGK. Residues 192–278 are Cytoplasmic-facing; that stretch reads VLFLNNAINH…VLMRPILILA (87 aa). A helical membrane pass occupies residues 279-298; the sequence is AIAGGVSGVLTFTIFDAGLV. Residues 299 to 318 lie on the Extracellular side of the membrane; sequence AVPSPGSIFALLAMTPKGNY. A helical transmembrane segment spans residues 319 to 340; it reads LGVLAGVLVATAVSFFVASIFL. Topologically, residues 341–471 are cytoplasmic; the sequence is KSAKNNEEDI…YDELIEMLKK (131 aa). Residues 383–471 form the PTS EIIB type-2 domain; the sequence is KKIVFACDAG…YDELIEMLKK (89 aa). Residue Cys389 is the Phosphocysteine intermediate; for EIIB activity of the active site. The residue at position 389 (Cys389) is a Phosphocysteine; by EIIA.

In terms of assembly, homodimer.

Its subcellular location is the cell membrane. The enzyme catalyses D-mannitol(out) + N(pros)-phospho-L-histidyl-[protein] = D-mannitol 1-phosphate(in) + L-histidyl-[protein]. Functionally, the phosphoenolpyruvate-dependent sugar phosphotransferase system (sugar PTS), a major carbohydrate active transport system, catalyzes the phosphorylation of incoming sugar substrates concomitantly with their translocation across the cell membrane. The enzyme II CmtAB PTS system is involved in D-mannitol transport. The chain is PTS system mannitol-specific EIICB component from Geobacillus stearothermophilus (Bacillus stearothermophilus).